Consider the following 235-residue polypeptide: Adenosine 5'-phosphosulfate reductase (235 aa).

4 residues coordinate [4Fe-4S] cluster: C121, C122, C204, and C207. The active-site Nucleophile; cysteine thiosulfonate intermediate is C230.

The protein belongs to the PAPS reductase family. CysH subfamily. [4Fe-4S] cluster serves as cofactor.

The protein localises to the cytoplasm. It carries out the reaction [thioredoxin]-disulfide + sulfite + AMP + 2 H(+) = adenosine 5'-phosphosulfate + [thioredoxin]-dithiol. The protein operates within sulfur metabolism; hydrogen sulfide biosynthesis; sulfite from sulfate. Catalyzes the formation of sulfite from adenosine 5'-phosphosulfate (APS) using thioredoxin as an electron donor. The polypeptide is Adenosine 5'-phosphosulfate reductase (Geobacillus thermodenitrificans (strain NG80-2)).